Reading from the N-terminus, the 300-residue chain is Ribosomal protein L11 methyltransferase (300 aa).

The S-adenosyl-L-methionine site is built by threonine 147, glycine 168, aspartate 190, and asparagine 236.

Belongs to the methyltransferase superfamily. PrmA family.

The protein resides in the cytoplasm. It catalyses the reaction L-lysyl-[protein] + 3 S-adenosyl-L-methionine = N(6),N(6),N(6)-trimethyl-L-lysyl-[protein] + 3 S-adenosyl-L-homocysteine + 3 H(+). Its function is as follows. Methylates ribosomal protein L11. The polypeptide is Ribosomal protein L11 methyltransferase (Leptospira interrogans serogroup Icterohaemorrhagiae serovar Lai (strain 56601)).